The chain runs to 321 residues: Citrate synthase (321 aa).

Catalysis depends on residues H248 and D306.

This sequence belongs to the citrate synthase family.

The enzyme catalyses oxaloacetate + acetyl-CoA + H2O = citrate + CoA + H(+). The protein operates within carbohydrate metabolism; tricarboxylic acid cycle; isocitrate from oxaloacetate: step 1/2. The chain is Citrate synthase (gltA) from Bartonella elizabethae (Rochalimaea elizabethae).